The chain runs to 171 residues: Ponticulin-like protein F (171 aa).

Residues 1–20 (MKFIPALIIFVFTIFALTNS) form the signal peptide. The GPI-like-anchor amidated glycine moiety is linked to residue Gly-149. Positions 150 to 171 (TSSTIVIPFALILSLLLSVITL) are cleaved as a propeptide — removed in mature form.

This sequence belongs to the ponticulin family. The GPI-like-anchor contains a phosphoceramide group, rather than a phosphatidyl group.

The protein resides in the cell membrane. The sequence is that of Ponticulin-like protein F (ponF) from Dictyostelium discoideum (Social amoeba).